Consider the following 339-residue polypeptide: Lipoyl synthase (339 aa).

The interval 13 to 35 (RPKLDAPARPRHPEKAHRPDTAI) is disordered. The [4Fe-4S] cluster site is built by Cys68, Cys73, Cys79, Cys94, Cys98, Cys101, and Ser307. Positions 80-296 (WEKRHATFMI…ETTAYAKGFL (217 aa)) constitute a Radical SAM core domain.

The protein belongs to the radical SAM superfamily. Lipoyl synthase family. Requires [4Fe-4S] cluster as cofactor.

The protein localises to the cytoplasm. The catalysed reaction is [[Fe-S] cluster scaffold protein carrying a second [4Fe-4S](2+) cluster] + N(6)-octanoyl-L-lysyl-[protein] + 2 oxidized [2Fe-2S]-[ferredoxin] + 2 S-adenosyl-L-methionine + 4 H(+) = [[Fe-S] cluster scaffold protein] + N(6)-[(R)-dihydrolipoyl]-L-lysyl-[protein] + 4 Fe(3+) + 2 hydrogen sulfide + 2 5'-deoxyadenosine + 2 L-methionine + 2 reduced [2Fe-2S]-[ferredoxin]. The protein operates within protein modification; protein lipoylation via endogenous pathway; protein N(6)-(lipoyl)lysine from octanoyl-[acyl-carrier-protein]: step 2/2. Catalyzes the radical-mediated insertion of two sulfur atoms into the C-6 and C-8 positions of the octanoyl moiety bound to the lipoyl domains of lipoate-dependent enzymes, thereby converting the octanoylated domains into lipoylated derivatives. This chain is Lipoyl synthase, found in Methylorubrum extorquens (strain PA1) (Methylobacterium extorquens).